The primary structure comprises 244 residues: MNINRQTAFITGANQGIGKAIAKKLIKKGIQVIGTSTTEDGVKRINDYLEGNGFGFVLNLKNIDSITEKIQEIYKKKHSIDILINNAGIKEDNLLVNMKSTEWDDVIKTNLSSVFHLVKSVIRSMIKKRQGRIITIGSVIAYTGNKGQVNYSASKSGLIGFHKSLALEVASKGITVNIVSPGLIKTNFTEKLNSIQYQKYLSNIPMKRFGQKEEVADAVIFLASKKASYITGHTLHVNGGMYMI.

NADP(+)-binding positions include 12-15 and T37; that span reads GANQ. Positions 50 and 53 each coordinate Ca(2+). Residues 59–60 and N86 contribute to the NADP(+) site; that span reads NL. S138 provides a ligand contact to substrate. Position 145 (N145) interacts with Ca(2+). Y151 functions as the Proton acceptor in the catalytic mechanism. Residues 151–155 and I184 each bind NADP(+); that span reads YSASK. T234 lines the Ca(2+) pocket.

It belongs to the short-chain dehydrogenases/reductases (SDR) family. As to quaternary structure, homotetramer.

It carries out the reaction a (3R)-hydroxyacyl-[ACP] + NADP(+) = a 3-oxoacyl-[ACP] + NADPH + H(+). The protein operates within lipid metabolism; fatty acid biosynthesis. Its function is as follows. Catalyzes the NADPH-dependent reduction of beta-ketoacyl-ACP substrates to beta-hydroxyacyl-ACP products, the first reductive step in the elongation cycle of fatty acid biosynthesis. In Buchnera aphidicola subsp. Acyrthosiphon pisum (strain APS) (Acyrthosiphon pisum symbiotic bacterium), this protein is 3-oxoacyl-[acyl-carrier-protein] reductase FabG (fabG).